The following is an 865-amino-acid chain: Xylosyltransferase 2 (865 aa).

Residues Met-1–Lys-15 are Cytoplasmic-facing. The chain crosses the membrane as a helical; Signal-anchor for type II membrane protein span at residues Leu-16–Ser-36. Over Gly-37–Arg-865 the chain is Lumenal. Residues Glu-39–Asp-155 are disordered. Residues Arg-53–Asp-65 show a composition bias toward basic and acidic residues. The span at Ser-73–Arg-82 shows a compositional bias: basic residues. Asn-122 is a glycosylation site (N-linked (GlcNAc...) asparagine). Cystine bridges form between Cys-162/Cys-190, Cys-206/Cys-448, Cys-467/Cys-480, and Cys-469/Cys-478. UDP-alpha-D-xylose contacts are provided by residues Val-239, Asp-267, and Thr-296–Trp-298. Asn-327 carries N-linked (GlcNAc...) asparagine glycosylation. Asp-400–Trp-401 serves as a coordination point for UDP-alpha-D-xylose. Residues Ser-481 and Arg-504–Lys-505 contribute to the UDP-alpha-D-xylose site. Cystine bridges form between Cys-581-Cys-833 and Cys-826-Cys-839. Asn-683 carries an N-linked (GlcNAc...) asparagine glycan.

It belongs to the glycosyltransferase 14 family. XylT subfamily. As to quaternary structure, monomer. The cofactor is Mg(2+). It depends on Mn(2+) as a cofactor. In terms of processing, contains disulfide bonds. Detected in brain, liver, lung, kidney, heart, spleen and testis, and at lower levels in skeletal muscle.

It is found in the golgi apparatus membrane. The protein resides in the secreted. It carries out the reaction UDP-alpha-D-xylose + L-seryl-[protein] = 3-O-(beta-D-xylosyl)-L-seryl-[protein] + UDP + H(+). It participates in glycan metabolism; chondroitin sulfate biosynthesis. Its pathway is glycan metabolism; heparan sulfate biosynthesis. Its function is as follows. Catalyzes the first step in the biosynthesis of chondroitin sulfate, heparan sulfate and dermatan sulfate proteoglycans, such as DCN. Transfers D-xylose from UDP-D-xylose to specific serine residues of the core protein. The protein is Xylosyltransferase 2 (Xylt2) of Mus musculus (Mouse).